A 188-amino-acid chain; its full sequence is 2-amino-4-hydroxy-6-hydroxymethyldihydropteridine pyrophosphokinase (188 aa).

It belongs to the HPPK family.

The enzyme catalyses 6-hydroxymethyl-7,8-dihydropterin + ATP = (7,8-dihydropterin-6-yl)methyl diphosphate + AMP + H(+). It functions in the pathway cofactor biosynthesis; tetrahydrofolate biosynthesis; 2-amino-4-hydroxy-6-hydroxymethyl-7,8-dihydropteridine diphosphate from 7,8-dihydroneopterin triphosphate: step 4/4. Catalyzes the transfer of pyrophosphate from adenosine triphosphate (ATP) to 6-hydroxymethyl-7,8-dihydropterin, an enzymatic step in folate biosynthesis pathway. The sequence is that of 2-amino-4-hydroxy-6-hydroxymethyldihydropteridine pyrophosphokinase (folK) from Mycobacterium tuberculosis (strain ATCC 25618 / H37Rv).